We begin with the raw amino-acid sequence, 435 residues long: Glutamyl-tRNA reductase (435 aa).

Residues 49–52 (TCNR), Ser-114, 119–121 (EPQ), and Gln-125 each bind substrate. Cys-50 functions as the Nucleophile in the catalytic mechanism. 204 to 209 (GAGETI) is a binding site for NADP(+).

It belongs to the glutamyl-tRNA reductase family. As to quaternary structure, homodimer.

It catalyses the reaction (S)-4-amino-5-oxopentanoate + tRNA(Glu) + NADP(+) = L-glutamyl-tRNA(Glu) + NADPH + H(+). It functions in the pathway porphyrin-containing compound metabolism; protoporphyrin-IX biosynthesis; 5-aminolevulinate from L-glutamyl-tRNA(Glu): step 1/2. Catalyzes the NADPH-dependent reduction of glutamyl-tRNA(Glu) to glutamate 1-semialdehyde (GSA). The polypeptide is Glutamyl-tRNA reductase (Actinobacillus succinogenes (strain ATCC 55618 / DSM 22257 / CCUG 43843 / 130Z)).